A 499-amino-acid polypeptide reads, in one-letter code: Isoflavone 2'-hydroxylase (499 aa).

Cys-436 lines the heme pocket.

This sequence belongs to the cytochrome P450 family. Requires heme as cofactor.

It localises to the membrane. The enzyme catalyses a 2'-unsubstituted isoflavone + reduced [NADPH--hemoprotein reductase] + O2 = a 2'-hydroxyisoflavone + oxidized [NADPH--hemoprotein reductase] + H2O + H(+). Its function is as follows. Catalyzes the hydroxylation of isoflavones, daidzein and formononetin, to yield 2'-hydroxyisoflavones, 2'-hydroxydaidzein, and 2'-hydroxyformononetin, respectively. The sequence is that of Isoflavone 2'-hydroxylase (CYP81E1) from Glycyrrhiza echinata (Licorice).